The following is a 316-amino-acid chain: Acetyl-coenzyme A carboxylase carboxyl transferase subunit alpha (316 aa).

A CoA carboxyltransferase C-terminal domain is found at 40-293 (LERRSKDALR…GETIENGFRE (254 aa)).

Belongs to the AccA family. As to quaternary structure, acetyl-CoA carboxylase is a heterohexamer composed of biotin carboxyl carrier protein (AccB), biotin carboxylase (AccC) and two subunits each of ACCase subunit alpha (AccA) and ACCase subunit beta (AccD).

Its subcellular location is the cytoplasm. The enzyme catalyses N(6)-carboxybiotinyl-L-lysyl-[protein] + acetyl-CoA = N(6)-biotinyl-L-lysyl-[protein] + malonyl-CoA. Its pathway is lipid metabolism; malonyl-CoA biosynthesis; malonyl-CoA from acetyl-CoA: step 1/1. Its function is as follows. Component of the acetyl coenzyme A carboxylase (ACC) complex. First, biotin carboxylase catalyzes the carboxylation of biotin on its carrier protein (BCCP) and then the CO(2) group is transferred by the carboxyltransferase to acetyl-CoA to form malonyl-CoA. In Chelativorans sp. (strain BNC1), this protein is Acetyl-coenzyme A carboxylase carboxyl transferase subunit alpha.